A 291-amino-acid chain; its full sequence is 4-hydroxy-tetrahydrodipicolinate synthase (291 aa).

A pyruvate-binding site is contributed by Thr44. Catalysis depends on Tyr132, which acts as the Proton donor/acceptor. Lys160 acts as the Schiff-base intermediate with substrate in catalysis. Ile202 lines the pyruvate pocket.

It belongs to the DapA family. In terms of assembly, homotetramer; dimer of dimers.

It localises to the cytoplasm. The enzyme catalyses L-aspartate 4-semialdehyde + pyruvate = (2S,4S)-4-hydroxy-2,3,4,5-tetrahydrodipicolinate + H2O + H(+). It functions in the pathway amino-acid biosynthesis; L-lysine biosynthesis via DAP pathway; (S)-tetrahydrodipicolinate from L-aspartate: step 3/4. Catalyzes the condensation of (S)-aspartate-beta-semialdehyde [(S)-ASA] and pyruvate to 4-hydroxy-tetrahydrodipicolinate (HTPA). This chain is 4-hydroxy-tetrahydrodipicolinate synthase, found in Parvibaculum lavamentivorans (strain DS-1 / DSM 13023 / NCIMB 13966).